The following is a 343-amino-acid chain: Acetylglutamate kinase (343 aa).

Substrate contacts are provided by residues 98 to 99, Arg120, and Asn219; that span reads GG.

Belongs to the acetylglutamate kinase family. ArgB subfamily.

It localises to the cytoplasm. The enzyme catalyses N-acetyl-L-glutamate + ATP = N-acetyl-L-glutamyl 5-phosphate + ADP. It functions in the pathway amino-acid biosynthesis; L-arginine biosynthesis; N(2)-acetyl-L-ornithine from L-glutamate: step 2/4. Its function is as follows. Catalyzes the ATP-dependent phosphorylation of N-acetyl-L-glutamate. This chain is Acetylglutamate kinase, found in Frankia alni (strain DSM 45986 / CECT 9034 / ACN14a).